Consider the following 210-residue polypeptide: MAKALVLLSLVLVSVFVNNGTASENQRLFNNAVIRVQHLHQLAAKMINDFEDSLLPEERRQLSKIFPLSFCNSDSIEAPTGKDETQKSSVLKLLRISFRLIESWEYPSQTLSGTISNSLTIGNPSQITEKLADLKVGISVLIKGCLDGQPNMDDNDSLPLPFEDFYLTLGENNLRESFRLLACFKKDMHKVETYLRVANCRRSLDSNCTL.

The N-terminal stretch at 1–22 (MAKALVLLSLVLVSVFVNNGTA) is a signal peptide. H38 serves as a coordination point for Zn(2+). A disulfide bridge links C71 with C183. E192 lines the Zn(2+) pocket. C200 and C208 are disulfide-bonded.

This sequence belongs to the somatotropin/prolactin family.

The protein localises to the secreted. In terms of biological role, growth hormone plays an important role in growth control and is involved in the regulation of several anabolic processes. Implicated as an osmoregulatory substance important for seawater adaptation. This chain is Somatotropin (gh), found in Misgurnus mizolepis (Chinese weatherloach).